A 320-amino-acid chain; its full sequence is Ribose-phosphate pyrophosphokinase 3 (320 aa).

Mg(2+)-binding residues include Asp131, His133, Asp142, and Asp146.

It belongs to the ribose-phosphate pyrophosphokinase family.

The protein resides in the cytoplasm. It catalyses the reaction D-ribose 5-phosphate + ATP = 5-phospho-alpha-D-ribose 1-diphosphate + AMP + H(+). It participates in metabolic intermediate biosynthesis; 5-phospho-alpha-D-ribose 1-diphosphate biosynthesis; 5-phospho-alpha-D-ribose 1-diphosphate from D-ribose 5-phosphate (route I): step 1/1. In terms of biological role, 5-phosphoribose 1-diphosphate synthase involved in nucleotide, histidine, and tryptophan biosynthesis. Active in heteromultimeric complexes with other 5-phosphoribose 1-diphosphate synthases (PRS2, PRS3, PRS4 and PRS5). The sequence is that of Ribose-phosphate pyrophosphokinase 3 (PRS3) from Saccharomyces cerevisiae (strain ATCC 204508 / S288c) (Baker's yeast).